The primary structure comprises 282 residues: 4-hydroxy-3-methylbut-2-enyl diphosphate reductase (282 aa).

Cys-14 provides a ligand contact to [4Fe-4S] cluster. Residues His-43 and His-78 each contribute to the (2E)-4-hydroxy-3-methylbut-2-enyl diphosphate site. 2 residues coordinate dimethylallyl diphosphate: His-43 and His-78. The isopentenyl diphosphate site is built by His-43 and His-78. Cys-100 contributes to the [4Fe-4S] cluster binding site. Residue His-128 coordinates (2E)-4-hydroxy-3-methylbut-2-enyl diphosphate. Position 128 (His-128) interacts with dimethylallyl diphosphate. Isopentenyl diphosphate is bound at residue His-128. Catalysis depends on Glu-130, which acts as the Proton donor. Position 164 (Thr-164) interacts with (2E)-4-hydroxy-3-methylbut-2-enyl diphosphate. [4Fe-4S] cluster is bound at residue Cys-192. 4 residues coordinate (2E)-4-hydroxy-3-methylbut-2-enyl diphosphate: Ser-220, Ser-221, Asn-222, and Ser-266. Ser-220, Ser-221, Asn-222, and Ser-266 together coordinate dimethylallyl diphosphate. Isopentenyl diphosphate is bound by residues Ser-220, Ser-221, Asn-222, and Ser-266.

This sequence belongs to the IspH family. Requires [4Fe-4S] cluster as cofactor.

It catalyses the reaction isopentenyl diphosphate + 2 oxidized [2Fe-2S]-[ferredoxin] + H2O = (2E)-4-hydroxy-3-methylbut-2-enyl diphosphate + 2 reduced [2Fe-2S]-[ferredoxin] + 2 H(+). The enzyme catalyses dimethylallyl diphosphate + 2 oxidized [2Fe-2S]-[ferredoxin] + H2O = (2E)-4-hydroxy-3-methylbut-2-enyl diphosphate + 2 reduced [2Fe-2S]-[ferredoxin] + 2 H(+). It functions in the pathway isoprenoid biosynthesis; dimethylallyl diphosphate biosynthesis; dimethylallyl diphosphate from (2E)-4-hydroxy-3-methylbutenyl diphosphate: step 1/1. The protein operates within isoprenoid biosynthesis; isopentenyl diphosphate biosynthesis via DXP pathway; isopentenyl diphosphate from 1-deoxy-D-xylulose 5-phosphate: step 6/6. Catalyzes the conversion of 1-hydroxy-2-methyl-2-(E)-butenyl 4-diphosphate (HMBPP) into a mixture of isopentenyl diphosphate (IPP) and dimethylallyl diphosphate (DMAPP). Acts in the terminal step of the DOXP/MEP pathway for isoprenoid precursor biosynthesis. This chain is 4-hydroxy-3-methylbut-2-enyl diphosphate reductase, found in Clostridium perfringens (strain SM101 / Type A).